Consider the following 590-residue polypeptide: Mannosyl-oligosaccharide 1,2-alpha-mannosidase mans-2 (590 aa).

Residues 1-9 are Cytoplasmic-facing; that stretch reads MKTVRFNKQ. A helical; Signal-anchor for type II membrane protein transmembrane segment spans residues 10–30; sequence ALAILAACFIFLLCVVCYFSA. At 31-590 the chain is on the lumenal side; sequence SSESHNAVVV…EAHPVPVLTN (560 aa). A compositionally biased stretch (basic and acidic residues) spans 88 to 102; it reads PARVESKPPGEKTST. The disordered stretch occupies residues 88–112; the sequence is PARVESKPPGEKTSTEPEETGVGKA. N-linked (GlcNAc...) asparagine glycosylation is found at Asn-156, Asn-212, Asn-373, and Asn-402. Residues Cys-423 and Cys-456 are joined by a disulfide bond. Glu-470 serves as the catalytic Proton donor. Thr-580 lines the Ca(2+) pocket.

It belongs to the glycosyl hydrolase 47 family. It depends on Ca(2+) as a cofactor.

It is found in the membrane. The catalysed reaction is N(4)-(alpha-D-Man-(1-&gt;2)-alpha-D-Man-(1-&gt;2)-alpha-D-Man-(1-&gt;3)-[alpha-D-Man-(1-&gt;2)-alpha-D-Man-(1-&gt;3)-[alpha-D-Man-(1-&gt;2)-alpha-D-Man-(1-&gt;6)]-alpha-D-Man-(1-&gt;6)]-beta-D-Man-(1-&gt;4)-beta-D-GlcNAc-(1-&gt;4)-beta-D-GlcNAc)-L-asparaginyl-[protein] (N-glucan mannose isomer 9A1,2,3B1,2,3) + 4 H2O = N(4)-(alpha-D-Man-(1-&gt;3)-[alpha-D-Man-(1-&gt;3)-[alpha-D-Man-(1-&gt;6)]-alpha-D-Man-(1-&gt;6)]-beta-D-Man-(1-&gt;4)-beta-D-GlcNAc-(1-&gt;4)-beta-D-GlcNAc)-L-asparaginyl-[protein] (N-glucan mannose isomer 5A1,2) + 4 beta-D-mannose. It catalyses the reaction N(4)-(alpha-D-Man-(1-&gt;2)-alpha-D-Man-(1-&gt;2)-alpha-D-Man-(1-&gt;3)-[alpha-D-Man-(1-&gt;3)-[alpha-D-Man-(1-&gt;2)-alpha-D-Man-(1-&gt;6)]-alpha-D-Man-(1-&gt;6)]-beta-D-Man-(1-&gt;4)-beta-D-GlcNAc-(1-&gt;4)-beta-D-GlcNAc)-L-asparaginyl-[protein] (N-glucan mannose isomer 8A1,2,3B1,3) + 3 H2O = N(4)-(alpha-D-Man-(1-&gt;3)-[alpha-D-Man-(1-&gt;3)-[alpha-D-Man-(1-&gt;6)]-alpha-D-Man-(1-&gt;6)]-beta-D-Man-(1-&gt;4)-beta-D-GlcNAc-(1-&gt;4)-beta-D-GlcNAc)-L-asparaginyl-[protein] (N-glucan mannose isomer 5A1,2) + 3 beta-D-mannose. It participates in protein modification; protein glycosylation. Its function is as follows. Involved in the maturation of Asn-linked oligosaccharides. Progressively trim alpha-1,2-linked mannose residues from Man(9)GlcNAc(2) to produce Man(5)GlcNAc(2). The sequence is that of Mannosyl-oligosaccharide 1,2-alpha-mannosidase mans-2 from Caenorhabditis elegans.